The sequence spans 304 residues: tRNA U34 carboxymethyltransferase (304 aa).

Carboxy-S-adenosyl-L-methionine contacts are provided by residues K73, W87, K92, G111, 133 to 135 (DPS), 160 to 161 (VE), Y180, and R295.

This sequence belongs to the class I-like SAM-binding methyltransferase superfamily. CmoB family. In terms of assembly, homotetramer.

It carries out the reaction carboxy-S-adenosyl-L-methionine + 5-hydroxyuridine(34) in tRNA = 5-carboxymethoxyuridine(34) in tRNA + S-adenosyl-L-homocysteine + H(+). Functionally, catalyzes carboxymethyl transfer from carboxy-S-adenosyl-L-methionine (Cx-SAM) to 5-hydroxyuridine (ho5U) to form 5-carboxymethoxyuridine (cmo5U) at position 34 in tRNAs. This is tRNA U34 carboxymethyltransferase from Aliarcobacter butzleri (strain RM4018) (Arcobacter butzleri).